Reading from the N-terminus, the 466-residue chain is Sushi repeat-containing protein SRPX2 (466 aa).

The signal sequence occupies residues 1–24; it reads MKTGSLTQRGALLLLLLLAPAVTP. 3 Sushi domains span residues 70-120, 121-179, and 263-322; these read ATCY…YCRQ, MRCH…VCVD, and RRCP…VCTP. Cystine bridges form between cysteine 72-cysteine 106, cysteine 92-cysteine 118, cysteine 123-cysteine 164, and cysteine 150-cysteine 177. Positions 178–262 constitute an HYR domain; that stretch reads VDIDPPKIRC…SCKFIVKVQV (85 aa). Intrachain disulfides connect cysteine 265–cysteine 307 and cysteine 293–cysteine 320.

As to quaternary structure, forms homooligomers. Interacts with PLAUR (via the UPAR/Ly6 domains), ADAMTS4 and CTSB. Interacts with HGF; the interaction increases the mitogenic activity of HGF. In terms of processing, contains chondroitin sulfate chains.

The protein localises to the secreted. It localises to the cytoplasm. Its subcellular location is the cell surface. It is found in the synapse. Functionally, acts as a ligand for the urokinase plasminogen activator surface receptor. Plays a role in angiogenesis by inducing endothelial cell migration and the formation of vascular network (cords). Involved in cellular migration and adhesion. Increases the phosphorylation levels of FAK. Interacts with and increases the mitogenic activity of HGF. Promotes synapse formation. The protein is Sushi repeat-containing protein SRPX2 of Rattus norvegicus (Rat).